An 86-amino-acid polypeptide reads, in one-letter code: MASSLSFGSRFLIALIRGYQLVISPLLGPRCRFNPTCSQYGIEALRRFGVIKGCWLTVKRVLKCHPLHEGGDDPVPPVKNNDNREH.

Residues 67–86 (LHEGGDDPVPPVKNNDNREH) are disordered.

This sequence belongs to the UPF0161 family.

The protein resides in the cell inner membrane. Could be involved in insertion of integral membrane proteins into the membrane. In Photorhabdus laumondii subsp. laumondii (strain DSM 15139 / CIP 105565 / TT01) (Photorhabdus luminescens subsp. laumondii), this protein is Putative membrane protein insertion efficiency factor.